The chain runs to 283 residues: Short-chain dehydrogenase cctT (283 aa).

The first 20 residues, 1-20 (MLKTVLITGCSHGGLGAAMA), serve as a signal peptide directing secretion. Ile-7, Thr-33, Lys-39, Glu-55, and Asn-83 together coordinate NADP(+). N-linked (GlcNAc...) asparagine glycosylation occurs at Asn-131. The active-site Proton donor is the Ser-133. The NADP(+) site is built by Tyr-147, Arg-151, Val-180, and Thr-182. Tyr-147 (proton acceptor) is an active-site residue.

It belongs to the short-chain dehydrogenases/reductases (SDR) family.

Short-chain dehydrogenase; part of the gene cluster that mediates the biosynthesis of the mycotoxin cyclochlorotine, a hepatotoxic and carcinogenic cyclic chlorinated pentapeptide. The function of cctT within the pathway, if any, remains undetermined. The NRPS cctN initially catalyzes the condensation of L-serine (Ser), Pro, L-2-aminobutyrate (2Abu), Ser, and beta-Phe in this order to produce isocyclotine. After the dichlorination of Pro2 catalyzed by cctP2 to produce isocyclochlorotine, the cctO-mediated transacylation of isocyclochlorotine can furnish cyclochlorotine. The subsequent hydroxylation of cyclochlorotine by cctR yields hydroxycyclochlorotine as the final product. CctP1 probably acts as a phenylalanine aminomutase and provides the uncommon building block beta-Phe. Furthermore, 2Abu can be synthesized from threonine by one of the threonine dehydratases and transaminases localized outside of the cluster. The functions of the remaining proteins encoded by the cluster, cctM and cctT, have not been identified yet. The polypeptide is Short-chain dehydrogenase cctT (Talaromyces islandicus (Penicillium islandicum)).